The sequence spans 465 residues: Ras GTPase-activating protein-binding protein 1 (465 aa).

One can recognise an NTF2 domain in the interval 11–133; it reads VGREFVRQYY…FYVHNDIFRY (123 aa). Glycyl lysine isopeptide (Lys-Gly) (interchain with G-Cter in ubiquitin) cross-links involve residues lysine 36, lysine 50, lysine 59, lysine 64, lysine 76, and lysine 123. The tract at residues 142–224 is acidic disordered region; the sequence is ITEPQEESEE…EPVLEETAPE (83 aa). Threonine 143 carries the post-translational modification Phosphothreonine. Composition is skewed to acidic residues over residues 145 to 157 and 184 to 205; these read PQEE…EEPE and EHLE…EQEP. A disordered region spans residues 145-242; that stretch reads PQEESEEEVE…APADIAQTVQ (98 aa). Serine 149 carries the post-translational modification Phosphoserine. Serine 230, serine 231, serine 249, and serine 252 each carry phosphoserine. The tract at residues 254–326 is disordered; the sequence is TSKNLPPSGA…PVREAGEQGD (73 aa). 2 stretches are compositionally biased toward basic and acidic residues: residues 296 to 306 and 317 to 326; these read PQRDQRVREQR and PVREAGEQGD. The 76-residue stretch at 339 to 414 folds into the RRM domain; sequence HQLFIGNLPH…VRLNVEEKKT (76 aa). Glycyl lysine isopeptide (Lys-Gly) (interchain with G-Cter in ubiquitin) cross-links involve residues lysine 352 and lysine 356. Phosphoserine is present on serine 372. Lysine 375 participates in a covalent cross-link: Glycyl lysine isopeptide (Lys-Gly) (interchain with G-Cter in ubiquitin). N6-acetyllysine; alternate is present on lysine 375. Lysine 375 is covalently cross-linked (Glycyl lysine isopeptide (Lys-Gly) (interchain with G-Cter in SUMO2); alternate). A Glycyl lysine isopeptide (Lys-Gly) (interchain with G-Cter in ubiquitin); alternate cross-link involves residue lysine 392. The interval 409–465 is RG-rich region; sequence VEEKKTRAAREGDRRDNRLRGPGGPRGGLGGGMRGPPRGGMVQKPGFGVGRSIAPRQ. Over residues 412–427 the composition is skewed to basic and acidic residues; that stretch reads KKTRAAREGDRRDNRL. The segment at 412–465 is disordered; that stretch reads KKTRAAREGDRRDNRLRGPGGPRGGLGGGMRGPPRGGMVQKPGFGVGRSIAPRQ. The residue at position 428 (arginine 428) is an Asymmetric dimethylarginine. The segment covering 429–446 has biased composition (gly residues); the sequence is GPGGPRGGLGGGMRGPPR. Arginine 434 is modified (asymmetric dimethylarginine; alternate). Omega-N-methylarginine; alternate occurs at positions 434, 446, 459, and 464. Dimethylated arginine; alternate is present on arginine 459.

As to quaternary structure, homodimer and oligomer. Component of a TAU mRNP complex, at least composed of IGF2BP1, ELAVL4 and G3BP1. Binds to the SH3 domain of Ras GTPase-activating protein (RASA1) in proliferating cells. No interaction in quiescent cells. Interacts (via NTF2 domain) with USP10; inhibiting stress granule formation by lowering G3BP1 valence. Interacts (via NTF2 domain) with CAPRIN1; promoting stress granule formation by lowering the saturation-concentration of G3BP1. Interacts (via NTF2 domain) with UBAP2L; promoting stress granule formation. Associates (via RG-rich region) with 40S ribosome subunits. Interacts with RPTOR and SPAG5; this complex is increased by oxidative stress. Interacts with ATXN2L. Interacts with STYXL1. Interacts with CGAS (via N-terminus); this interaction promotes the DNA-binding and activation of CGAS. Interacts (via C-terminus) with RIGI. Interacts with PABPC1. Interacts with QKI (isoforms QKI6 and QKI7); directing N(7)-methylguanine-containing mRNAs to stress granules. Mg(2+) serves as cofactor. Post-translationally, phosphorylation of the acidic disordered region regulates stress granule assembly. RASA1-dependent phosphorylation of Ser-149 induces a conformational change that prevents self-association. Dephosphorylation after HRAS activation is required for stress granule assembly. Ser-149 phosphorylation induces partial nuclear localization. In terms of processing, arg-435 is dimethylated, probably to asymmetric dimethylarginine. Ubiquitinated by TRIM21 via 'Lys-63'-linked polyubiquitination in the NTF2 domain in response to heat shock, leading to stress granule disassembly: ubiquitination promotes interaction with the FAF2 adapter, followed by interaction with VCP, which extracts G3BP1 from stress granules, leading to stress granule disassembly. In case of prolonged stress, ubiquitination by TRIM21 leads to autophagy-dependent degradation of G3BP1 via recruitment of ubiquitinated G3BP1 by SQSTM1 and/or CALCOCO2 to autophagosomes.

The protein localises to the cytoplasm. It localises to the cytosol. Its subcellular location is the perikaryon. The protein resides in the stress granule. It is found in the nucleus. It catalyses the reaction ATP + H2O = ADP + phosphate + H(+). Under physiological conditions, G3BP1 adopts a compact state that is stabilized by intramolecular interactions between the RG-rich and the acidic regions that inhibit phase separation. Upon stress, polysomes disassemble and mRNAs are released in an unfolded protein-free state. Binding of unfolded mRNA to G3BP1 outcompetes the intramolecular interactions and RNA-bound G3BP1 adopts an expanded conformation in which the RG-rich region becomes exposed to engage in protein-protein and protein-RNA interactions, allowing physical cross-linking of RNA molecules to form protein-RNA condensates, leading to liquid-liquid phase separation (LLPS). Functionally, protein involved in various processes, such as stress granule formation and innate immunity. Plays an essential role in stress granule formation. Stress granules are membraneless compartments that store mRNAs and proteins, such as stalled translation pre-initiation complexes, in response to stress. Promotes formation of stress granules phase-separated membraneless compartment by undergoing liquid-liquid phase separation (LLPS) upon unfolded RNA-binding: functions as a molecular switch that triggers RNA-dependent LLPS in response to a rise in intracellular free RNA concentrations. Also acts as an ATP- and magnesium-dependent helicase: unwinds DNA/DNA, RNA/DNA, and RNA/RNA substrates with comparable efficiency. Acts unidirectionally by moving in the 5' to 3' direction along the bound single-stranded DNA. Unwinds preferentially partial DNA and RNA duplexes having a 17 bp annealed portion and either a hanging 3' tail or hanging tails at both 5'- and 3'-ends. Plays an essential role in innate immunity by promoting CGAS and RIGI activity. Participates in the DNA-triggered cGAS/STING pathway by promoting the DNA binding and activation of CGAS. Triggers the condensation of cGAS, a process probably linked to the formation of membrane-less organelles. Also enhances RIGI-induced type I interferon production probably by helping RIGI at sensing pathogenic RNA. May also act as a phosphorylation-dependent sequence-specific endoribonuclease in vitro: Cleaves exclusively between cytosine and adenine and cleaves MYC mRNA preferentially at the 3'-UTR. The chain is Ras GTPase-activating protein-binding protein 1 (G3BP1) from Bos taurus (Bovine).